Consider the following 861-residue polypeptide: Xylan 1,4-beta-xylosidase (861 aa).

A signal peptide spans 1–19 (MKYQLFLSLALCVGLGASA). Asp269 acts as the Nucleophile in catalysis. A PA14 domain is found at 458–600 (DGKKGLKGTF…DYQETIAQLK (143 aa)). The Proton donor/acceptor role is filled by Glu616.

This sequence belongs to the glycosyl hydrolase 3 family. As to quaternary structure, exists as a large polymeric species, presumably as a homononamer.

The enzyme catalyses Hydrolysis of (1-&gt;4)-beta-D-xylans, to remove successive D-xylose residues from the non-reducing termini.. It catalyses the reaction Hydrolysis of terminal non-reducing alpha-L-arabinofuranoside residues in alpha-L-arabinosides.. Its pathway is glycan degradation; xylan degradation. In terms of biological role, involved in degradation of plant cell wall polysaccharides. Has beta-xylosidase activity via its capacity to hydrolyze glycosidic linkages of beta-1,4-xylo-oligosaccharides of various lengths (X2 to X6), releasing xylose monomers. To a much lesser extent, also has alpha-L-arabinofuranosidase activity. Does not possess beta-D-glucosidase activity. Acts synergistically with Xyn10D-Fae1A to increase the release of xylose from xylan. This Xylanibacter ruminicola (strain ATCC 19189 / DSM 19721 / CIP 105475 / JCM 8958 / 23) (Prevotella ruminicola) protein is Xylan 1,4-beta-xylosidase.